Reading from the N-terminus, the 663-residue chain is Methionine--tRNA ligase (663 aa).

Positions 10 to 20 (AYTNGPLHLGH) match the 'HIGH' region motif. Residues C142, C145, C154, and C157 each coordinate Zn(2+). The 'KMSKS' region motif lies at 323–327 (KMSTS). T326 lines the ATP pocket. The tRNA-binding domain occupies 563 to 663 (YFTKVDLRVG…REISLGSKIH (101 aa)).

Belongs to the class-I aminoacyl-tRNA synthetase family. MetG type 1 subfamily. As to quaternary structure, homodimer. Zn(2+) serves as cofactor.

Its subcellular location is the cytoplasm. It catalyses the reaction tRNA(Met) + L-methionine + ATP = L-methionyl-tRNA(Met) + AMP + diphosphate. Is required not only for elongation of protein synthesis but also for the initiation of all mRNA translation through initiator tRNA(fMet) aminoacylation. This is Methionine--tRNA ligase from Methanococcus vannielii (strain ATCC 35089 / DSM 1224 / JCM 13029 / OCM 148 / SB).